Here is a 65-residue protein sequence, read N- to C-terminus: Large ribosomal subunit protein bL35 (65 aa).

The segment covering 1-16 has biased composition (basic residues); that stretch reads MPKMKTKKSAAKRFKV. Residues 1 to 25 are disordered; that stretch reads MPKMKTKKSAAKRFKVRGSGSIKRG.

This sequence belongs to the bacterial ribosomal protein bL35 family.

The polypeptide is Large ribosomal subunit protein bL35 (Bordetella parapertussis (strain 12822 / ATCC BAA-587 / NCTC 13253)).